We begin with the raw amino-acid sequence, 328 residues long: Tetraacyldisaccharide 4'-kinase (328 aa).

ATP is bound at residue 55–62 (TAGGNGKT).

This sequence belongs to the LpxK family.

It catalyses the reaction a lipid A disaccharide + ATP = a lipid IVA + ADP + H(+). Its pathway is glycolipid biosynthesis; lipid IV(A) biosynthesis; lipid IV(A) from (3R)-3-hydroxytetradecanoyl-[acyl-carrier-protein] and UDP-N-acetyl-alpha-D-glucosamine: step 6/6. Its function is as follows. Transfers the gamma-phosphate of ATP to the 4'-position of a tetraacyldisaccharide 1-phosphate intermediate (termed DS-1-P) to form tetraacyldisaccharide 1,4'-bis-phosphate (lipid IVA). This is Tetraacyldisaccharide 4'-kinase from Escherichia coli O81 (strain ED1a).